Reading from the N-terminus, the 270-residue chain is MKKLLIILAATLVLVLGSSGNFREYYGARGVAVNIADNNSSYIGFECPEMTLYLANGDSTGVISVKNNLGEDVELYFSTPNDILTFSNPTFLYAGEEKLVEAEFRGSQGEYTIPIDIEAFWDNGSAKIPACSVKVVDPAVRMSKVLLSGNTTVPLFTREVWKFRILVESDAGDNYTILDTIPAEFEVLSIAASDGSFATHHPGAGRSCTTKIVWDVYVEGTEFMDVTIATKHNPAGKQEFTSPGSYNLNDGAEIKGLGIVSNPIIVKAVR.

An N-terminal signal peptide occupies residues 1-23; the sequence is MKKLLIILAATLVLVLGSSGNFR.

This is an uncharacterized protein from Archaeoglobus fulgidus (strain ATCC 49558 / DSM 4304 / JCM 9628 / NBRC 100126 / VC-16).